Here is a 99-residue protein sequence, read N- to C-terminus: MFAIIQTGGKQVKVTEGQEIYVEKLDVEAGDTFEFTEVLATSDKIGHPYVEGAKVVAEVIKQGRQRKIIVFKYKRRKNYRRKQGHRQAYTKLVVKSIQG.

The protein belongs to the bacterial ribosomal protein bL21 family. In terms of assembly, part of the 50S ribosomal subunit. Contacts protein L20.

Its function is as follows. This protein binds to 23S rRNA in the presence of protein L20. The protein is Large ribosomal subunit protein bL21 of Acholeplasma laidlawii (strain PG-8A).